A 475-amino-acid polypeptide reads, in one-letter code: Aspartyl/glutamyl-tRNA(Asn/Gln) amidotransferase subunit B (475 aa).

The protein belongs to the GatB/GatE family. GatB subfamily. Heterotrimer of A, B and C subunits.

It catalyses the reaction L-glutamyl-tRNA(Gln) + L-glutamine + ATP + H2O = L-glutaminyl-tRNA(Gln) + L-glutamate + ADP + phosphate + H(+). It carries out the reaction L-aspartyl-tRNA(Asn) + L-glutamine + ATP + H2O = L-asparaginyl-tRNA(Asn) + L-glutamate + ADP + phosphate + 2 H(+). Allows the formation of correctly charged Asn-tRNA(Asn) or Gln-tRNA(Gln) through the transamidation of misacylated Asp-tRNA(Asn) or Glu-tRNA(Gln) in organisms which lack either or both of asparaginyl-tRNA or glutaminyl-tRNA synthetases. The reaction takes place in the presence of glutamine and ATP through an activated phospho-Asp-tRNA(Asn) or phospho-Glu-tRNA(Gln). This is Aspartyl/glutamyl-tRNA(Asn/Gln) amidotransferase subunit B from Bacillus cereus (strain B4264).